Reading from the N-terminus, the 458-residue chain is Phosphomethylpyrimidine synthase (458 aa).

Residues Asn-80, Met-109, Tyr-139, His-175, 195-197 (SRG), 236-239 (DSLR), and Glu-275 contribute to the substrate site. Residue His-279 coordinates Zn(2+). Tyr-302 contributes to the substrate binding site. His-343 provides a ligand contact to Zn(2+). [4Fe-4S] cluster-binding residues include Cys-423, Cys-426, and Cys-431.

It belongs to the ThiC family. The cofactor is [4Fe-4S] cluster.

The enzyme catalyses 5-amino-1-(5-phospho-beta-D-ribosyl)imidazole + S-adenosyl-L-methionine = 4-amino-2-methyl-5-(phosphooxymethyl)pyrimidine + CO + 5'-deoxyadenosine + formate + L-methionine + 3 H(+). It functions in the pathway cofactor biosynthesis; thiamine diphosphate biosynthesis. In terms of biological role, catalyzes the synthesis of the hydroxymethylpyrimidine phosphate (HMP-P) moiety of thiamine from aminoimidazole ribotide (AIR) in a radical S-adenosyl-L-methionine (SAM)-dependent reaction. The chain is Phosphomethylpyrimidine synthase from Cyanothece sp. (strain PCC 7425 / ATCC 29141).